Reading from the N-terminus, the 207-residue chain is uncharacterized protein (207 aa).

Disordered stretches follow at residues 1–81 (MNPT…GNTR) and 140–169 (TSQS…PPKK). Residues 21–40 (FEQTNSSASLTQKNSSSETE) are compositionally biased toward polar residues. Basic residues predominate over residues 58-70 (PTKRGSGRGRGRS). Over residues 140–152 (TSQSIDAQPTPSQ) the composition is skewed to polar residues. Over residues 156–165 (AHHEPHEKRG) the composition is skewed to basic and acidic residues.

Its subcellular location is the nucleus. It is found in the nucleolus. This is an uncharacterized protein from Schizosaccharomyces pombe (strain 972 / ATCC 24843) (Fission yeast).